A 240-amino-acid polypeptide reads, in one-letter code: Probable transcriptional regulatory protein HP_0162 (240 aa).

It belongs to the TACO1 family.

The protein localises to the cytoplasm. This is Probable transcriptional regulatory protein HP_0162 from Helicobacter pylori (strain ATCC 700392 / 26695) (Campylobacter pylori).